The sequence spans 127 residues: Large ribosomal subunit protein bL12 (127 aa).

It belongs to the bacterial ribosomal protein bL12 family. Homodimer. Part of the ribosomal stalk of the 50S ribosomal subunit. Forms a multimeric L10(L12)X complex, where L10 forms an elongated spine to which 2 to 4 L12 dimers bind in a sequential fashion. Binds GTP-bound translation factors.

In terms of biological role, forms part of the ribosomal stalk which helps the ribosome interact with GTP-bound translation factors. Is thus essential for accurate translation. The chain is Large ribosomal subunit protein bL12 from Rhizobium etli (strain CIAT 652).